We begin with the raw amino-acid sequence, 339 residues long: Heat-inducible transcription repressor HrcA (339 aa).

The protein belongs to the HrcA family.

Functionally, negative regulator of class I heat shock genes (grpE-dnaK-dnaJ and groELS operons). Prevents heat-shock induction of these operons. This chain is Heat-inducible transcription repressor HrcA, found in Clostridium perfringens (strain ATCC 13124 / DSM 756 / JCM 1290 / NCIMB 6125 / NCTC 8237 / Type A).